The chain runs to 265 residues: Aquaporin-5 (265 aa).

The Cytoplasmic segment spans residues 1 to 12 (MKKEVCSVAFLK). Residues 13-33 (AVFAEFLATLIFVFFGLGSAL) form a helical membrane-spanning segment. Over 34 to 39 (KWPSAL) the chain is Extracellular. The chain crosses the membrane as a helical span at residues 40-60 (PTILQIALAFGLAIGTLAQAL). Over 61–65 (GPVSG) the chain is Cytoplasmic. An intramembrane region (discontinuously helical) is located at residues 66–74 (GHINPAITL). The short motif at 69-71 (NPA) is the NPA 1 element. The Cytoplasmic segment spans residues 75 to 87 (ALLVGNQISLLRA). The helical transmembrane segment at 88-108 (FFYVAAQLVGAIAGAGILYGV) threads the bilayer. Residues 109–126 (APLNARGNLAVNALNNNT) are Extracellular-facing. Residues N124 and N125 are each glycosylated (N-linked (GlcNAc...) asparagine). The helical transmembrane segment at 127 to 147 (TQGQAMVVELILTFQLALCIF) threads the bilayer. At 148 to 158 (ASTDSRRTSPV) the chain is on the cytoplasmic side. Residues 159-179 (GSPALSIGLSVTLGHLVGIYF) form a helical membrane-spanning segment. T180 is a topological domain (extracellular). The segment at residues 181 to 191 (GCSMNPARSFG) is an intramembrane region (discontinuously helical). The short motif at 185–187 (NPA) is the NPA 2 element. Residues 192–203 (PAVVMNRFSPAH) are Extracellular-facing. Residues 204-224 (WVFWVGPIVGAVLAAILYFYL) form a helical membrane-spanning segment. Residues 225–265 (LFPNSLSLSERVAIIKGTYEPDEDWEEQREERKKTMELTTR) are Cytoplasmic-facing.

The protein belongs to the MIP/aquaporin (TC 1.A.8) family. In terms of assembly, homotetramer; each monomer provides an independent water pore. Interacts with TRPV4; the interaction is probably indirect and regulates TRPV4 activation by hypotonicity. As to expression, detected in skin eccrine sweat glands, at the apical cell membrane and at intercellular canaliculi (at protein level).

It localises to the apical cell membrane. The protein localises to the cell membrane. Its subcellular location is the cytoplasmic vesicle membrane. The enzyme catalyses H2O(in) = H2O(out). In terms of biological role, aquaporins form homotetrameric transmembrane channels, with each monomer independently mediating water transport across the plasma membrane along its osmotic gradient. Plays an important role in fluid secretion in salivary glands. Required for TRPV4 activation by hypotonicity. Together with TRPV4, controls regulatory volume decrease in salivary epithelial cells. Seems to play a redundant role in water transport in the eye, lung and in sweat glands. The polypeptide is Aquaporin-5 (Homo sapiens (Human)).